The following is a 167-amino-acid chain: Small ribosomal subunit protein uS5 (167 aa).

Positions 12 to 75 constitute an S5 DRBM domain; sequence LEERVVTINR…EDAKKNMVFV (64 aa).

The protein belongs to the universal ribosomal protein uS5 family. As to quaternary structure, part of the 30S ribosomal subunit. Contacts proteins S4 and S8.

Functionally, with S4 and S12 plays an important role in translational accuracy. Its function is as follows. Located at the back of the 30S subunit body where it stabilizes the conformation of the head with respect to the body. The protein is Small ribosomal subunit protein uS5 of Listeria innocua serovar 6a (strain ATCC BAA-680 / CLIP 11262).